We begin with the raw amino-acid sequence, 373 residues long: Anhydro-N-acetylmuramic acid kinase (373 aa).

13–20 lines the ATP pocket; the sequence is GTSMDGID.

Belongs to the anhydro-N-acetylmuramic acid kinase family.

It catalyses the reaction 1,6-anhydro-N-acetyl-beta-muramate + ATP + H2O = N-acetyl-D-muramate 6-phosphate + ADP + H(+). Its pathway is amino-sugar metabolism; 1,6-anhydro-N-acetylmuramate degradation. The protein operates within cell wall biogenesis; peptidoglycan recycling. Its function is as follows. Catalyzes the specific phosphorylation of 1,6-anhydro-N-acetylmuramic acid (anhMurNAc) with the simultaneous cleavage of the 1,6-anhydro ring, generating MurNAc-6-P. Is required for the utilization of anhMurNAc either imported from the medium or derived from its own cell wall murein, and thus plays a role in cell wall recycling. The protein is Anhydro-N-acetylmuramic acid kinase of Brucella suis (strain ATCC 23445 / NCTC 10510).